The chain runs to 202 residues: Large ribosomal subunit protein uL18 (202 aa).

Belongs to the universal ribosomal protein uL18 family. Part of the 50S ribosomal subunit. Contacts the 5S and 23S rRNAs.

Functionally, this is one of the proteins that bind and probably mediate the attachment of the 5S RNA into the large ribosomal subunit, where it forms part of the central protuberance. This is Large ribosomal subunit protein uL18 from Staphylothermus marinus (strain ATCC 43588 / DSM 3639 / JCM 9404 / F1).